The primary structure comprises 173 residues: MSSKKINPMREISIKKLSIHICARESGAKLDRAAKVLEQLTGQKPVTSKARMTIRNFGIRRNEKIAVHVNVSGKKAYELLNTALRVKEYELKESCFSNNGCFGFGIEEHIDLGLKYDPNIGIFGMDFFVILARPGDRVSKRKRCKSRVGNKQRVYAEDAKKWFVENFEGVLVE.

Belongs to the universal ribosomal protein uL5 family. In terms of assembly, component of the large ribosomal subunit.

The protein resides in the nucleus. It localises to the cytoplasm. In terms of biological role, component of the ribosome, a large ribonucleoprotein complex responsible for the synthesis of proteins in the cell. The small ribosomal subunit (SSU) binds messenger RNAs (mRNAs) and translates the encoded message by selecting cognate aminoacyl-transfer RNA (tRNA) molecules. The large subunit (LSU) contains the ribosomal catalytic site termed the peptidyl transferase center (PTC), which catalyzes the formation of peptide bonds, thereby polymerizing the amino acids delivered by tRNAs into a polypeptide chain. The nascent polypeptides leave the ribosome through a tunnel in the LSU and interact with protein factors that function in enzymatic processing, targeting, and the membrane insertion of nascent chains at the exit of the ribosomal tunnel. This chain is Large ribosomal subunit protein uL5 (RPL11), found in Encephalitozoon cuniculi (strain GB-M1) (Microsporidian parasite).